Here is a 315-residue protein sequence, read N- to C-terminus: Nucleotide-binding protein CGSHiEE_06315 (315 aa).

8–15 (GRSGAGKS) lines the ATP pocket. 56–59 (DIRN) serves as a coordination point for GTP.

The protein belongs to the RapZ-like family.

Its function is as follows. Displays ATPase and GTPase activities. The polypeptide is Nucleotide-binding protein CGSHiEE_06315 (Haemophilus influenzae (strain PittEE)).